The primary structure comprises 48 residues: Light-harvesting polypeptide B-885 beta-2 chain (48 aa).

Over Ala1–Thr20 the chain is Cytoplasmic. The chain crosses the membrane as a helical span at residues Leu21 to Trp43. His37 is an a bacteriochlorophyll binding site. At Arg44–Gln48 the chain is on the periplasmic side.

It belongs to the antenna complex beta subunit family. In terms of assembly, the core complex is formed by different alpha and beta chains, binding bacteriochlorophyll molecules, and arranged most probably in tetrameric structures disposed around the reaction center. The non-pigmented gamma chains may constitute additional components.

The protein resides in the cell inner membrane. Functionally, antenna complexes are light-harvesting systems, which transfer the excitation energy to the reaction centers. In Rhodocyclus tenuis (Rhodospirillum tenue), this protein is Light-harvesting polypeptide B-885 beta-2 chain.